A 467-amino-acid chain; its full sequence is Coiled-coil domain-containing protein 174 (467 aa).

2 disordered regions span residues 47–76 (INKKPSIWSKQNAGVTSRAEKDAEQKLEEQ) and 129–163 (GATRESQIEEERDDDDKEEFSDKDIPPPQDPSEEW). A compositionally biased stretch (basic and acidic residues) spans 64–76 (RAEKDAEQKLEEQ). Residues 64 to 99 (RAEKDAEQKLEEQKTLDKAREKLEEKAKLYEKMTKG) adopt a coiled-coil conformation. A compositionally biased stretch (acidic residues) spans 136–147 (IEEERDDDDKEE). At serine 198 the chain carries Phosphoserine. Residues 268 to 310 (LEMLREQTTDQRIKRENIKEKRKAMLEARLAKLRQKKMKKSKE) adopt a coiled-coil conformation. 2 disordered regions span residues 301–365 (RQKK…IREW) and 379–454 (KQSE…VTFQ). Basic and acidic residues-rich tracts occupy residues 349–365 (IQERRDTKPGVPHIREW) and 379–390 (KQSELRAERDPE). Polar residues predominate over residues 406 to 415 (PMSSQPQSRP). Low complexity predominate over residues 423–446 (GHSSGQSQEPSSSHTSTPASESSP).

The protein localises to the nucleus. In terms of biological role, probably involved in neuronal development. In Mus musculus (Mouse), this protein is Coiled-coil domain-containing protein 174 (Ccdc174).